A 272-amino-acid chain; its full sequence is ATP phosphoribosyltransferase regulatory subunit (272 aa).

The protein belongs to the class-II aminoacyl-tRNA synthetase family. HisZ subfamily. Heteromultimer composed of HisG and HisZ subunits.

The protein resides in the cytoplasm. The protein operates within amino-acid biosynthesis; L-histidine biosynthesis; L-histidine from 5-phospho-alpha-D-ribose 1-diphosphate: step 1/9. Functionally, required for the first step of histidine biosynthesis. May allow the feedback regulation of ATP phosphoribosyltransferase activity by histidine. In Staphylococcus aureus (strain USA300), this protein is ATP phosphoribosyltransferase regulatory subunit.